The sequence spans 332 residues: Methionine import ATP-binding protein MetN (332 aa).

The ABC transporter domain maps to 2–241 (IELKGLTKVF…PGSRLRELFY (240 aa)). Position 38–45 (38–45 (GQSGAGKS)) interacts with ATP.

This sequence belongs to the ABC transporter superfamily. Methionine importer (TC 3.A.1.24) family. The complex is composed of two ATP-binding proteins (MetN), two transmembrane proteins (MetI) and a solute-binding protein (MetQ).

It is found in the cell membrane. The enzyme catalyses L-methionine(out) + ATP + H2O = L-methionine(in) + ADP + phosphate + H(+). The catalysed reaction is D-methionine(out) + ATP + H2O = D-methionine(in) + ADP + phosphate + H(+). Part of the ABC transporter complex MetNIQ involved in methionine import. Responsible for energy coupling to the transport system. The protein is Methionine import ATP-binding protein MetN of Symbiobacterium thermophilum (strain DSM 24528 / JCM 14929 / IAM 14863 / T).